The sequence spans 571 residues: Coenzyme A biosynthesis protein 3 (571 aa).

Disordered regions lie at residues 1-72 and 100-120; these read MTDE…YKND and INTS…PSLP. Polar residues predominate over residues 8–35; that stretch reads SDQNMNGKQGVNLISSLPTTQVPVSILT. Position 42 is a phosphoserine (serine 42). Positions 43-59 are enriched in basic and acidic residues; it reads IHDESNFERSDSHEDQS. The segment covering 60-72 has biased composition (polar residues); that stretch reads KSNSNRRNIYKND. Phosphoserine is present on residues serine 116, serine 121, and serine 124. Disordered regions lie at residues 140–171 and 209–244; these read ISNK…LQEQ and IFKE…SMEK. Residues 146–171 show a composition bias toward low complexity; that stretch reads KQQQQQEQLQQNQQQEEQQKAQLQEQ. The residue at position 264 (serine 264) is a Phosphoserine. The disordered stretch occupies residues 507–571; it reads RDEETGDKEQ…EDEEDVKTEV (65 aa). Over residues 516-571 the composition is skewed to acidic residues; sequence QEQEEQEGADNEDDDDEDDEEDEEDEEEEEALNETASDESNDEEDEEDEEDVKTEV.

It belongs to the HFCD (homooligomeric flavin containing Cys decarboxylase) superfamily. In terms of assembly, component of the phosphopantothenoylcysteine decarboxylase (PPCDC) complex, a heterotrimer composed of CAB3, HAL3 and VHS3.

It localises to the cytoplasm. Component of the phosphopantothenoylcysteine decarboxylase (PPCDC) involved in the coenzyme A synthesis. This chain is Coenzyme A biosynthesis protein 3 (CAB3), found in Saccharomyces cerevisiae (strain ATCC 204508 / S288c) (Baker's yeast).